The primary structure comprises 143 residues: Cofilin (143 aa).

The ADF-H domain maps to 5–137 (GVAVADESLT…AYESVLEKVS (133 aa)).

It belongs to the actin-binding proteins ADF family.

Its subcellular location is the cytoplasm. The protein resides in the cytoskeleton. The protein localises to the nucleus matrix. In terms of biological role, controls reversibly actin polymerization and depolymerization in a pH-sensitive manner. It has the ability to bind G- and F-actin in a 1:1 ratio of cofilin to actin. Binding to F-actin is regulated by tropomyosin. It is the major component of intranuclear and cytoplasmic actin rods. Required for accumulation of actin at the cell division site via depolymerizing actin at the cell ends. In association with myosin II has a role in the assembly of the contractile ring via severing actin filaments. Involved in the maintenance of the contractile ring once formed. In association with profilin and capping protein, has a role in the mitotic reorganization of the actin cytoskeleton. The protein is Cofilin (COF1) of Eremothecium gossypii (strain ATCC 10895 / CBS 109.51 / FGSC 9923 / NRRL Y-1056) (Yeast).